The primary structure comprises 202 residues: LexA repressor (202 aa).

Residues 28 to 48 (RAEIAQQLGFRSPNAAEEHLK) constitute a DNA-binding region (H-T-H motif). Residues S119 and K156 each act as for autocatalytic cleavage activity in the active site.

It belongs to the peptidase S24 family. As to quaternary structure, homodimer.

The enzyme catalyses Hydrolysis of Ala-|-Gly bond in repressor LexA.. Its function is as follows. Represses a number of genes involved in the response to DNA damage (SOS response), including recA and lexA. In the presence of single-stranded DNA, RecA interacts with LexA causing an autocatalytic cleavage which disrupts the DNA-binding part of LexA, leading to derepression of the SOS regulon and eventually DNA repair. The polypeptide is LexA repressor (Pectobacterium atrosepticum (strain SCRI 1043 / ATCC BAA-672) (Erwinia carotovora subsp. atroseptica)).